The sequence spans 832 residues: Cytosolic carboxypeptidase-like protein 5 (832 aa).

The segment at threonine 27–proline 50 is disordered. The span at alanine 38 to proline 50 shows a compositional bias: low complexity. In terms of domain architecture, Peptidase M14 spans tyrosine 157–alanine 571. Residues histidine 252 and glutamate 255 each coordinate Zn(2+). Positions asparagine 343–serine 354 are enriched in low complexity. Disordered stretches follow at residues asparagine 343–proline 362 and leucine 376–proline 402. Over residues glycine 384–aspartate 401 the composition is skewed to basic and acidic residues. A Zn(2+)-binding site is contributed by histidine 435. Glutamate 517 serves as the catalytic Proton donor/acceptor. Positions serine 606–glycine 752 are disordered. A compositionally biased stretch (polar residues) spans proline 621–alanine 636. Residues serine 644–serine 654 are compositionally biased toward low complexity. Residues glutamine 655 to serine 666 are compositionally biased toward polar residues. Residues glutamine 708–glycine 752 are compositionally biased toward low complexity.

The protein belongs to the peptidase M14 family. The cofactor is Zn(2+).

Its subcellular location is the cytoplasm. The protein resides in the cytosol. It is found in the nucleus. It localises to the cytoskeleton. The protein localises to the spindle. Its subcellular location is the midbody. The enzyme catalyses gamma-L-glutamyl-L-glutamyl-[protein] + H2O = L-glutamyl-[protein] + L-glutamate. The catalysed reaction is (L-glutamyl)(n+1)-gamma-L-glutamyl-L-glutamyl-[protein] + H2O = (L-glutamyl)(n)-gamma-L-glutamyl-L-glutamyl-[protein] + L-glutamate. It catalyses the reaction C-terminal L-alpha-aminoacyl-L-glutamyl-[tubulin] + H2O = C-terminal L-alpha-aminoacyl-[tubulin] + L-glutamate. It carries out the reaction C-terminal L-alpha-aminoacyl-L-glutamyl-L-glutamyl-[tubulin] + H2O = C-terminal L-alpha-aminoacyl-L-glutamyl-[tubulin] + L-glutamate. In terms of biological role, metallocarboxypeptidase that mediates deglutamylation of tubulin and non-tubulin target proteins. Catalyzes the removal of polyglutamate side chains present on the gamma-carboxyl group of glutamate residues within the C-terminal tail of alpha- and beta-tubulin. Cleaves alpha- and gamma-linked polyglutamate tubulin side-chain, as well as the branching point glutamate. Also catalyzes the removal of alpha-linked glutamate residues from the carboxy-terminus of alpha-tubulin. Mediates deglutamylation of nucleotidyltransferase CGAS, leading to CGAS antiviral defense response activation. The polypeptide is Cytosolic carboxypeptidase-like protein 5 (Agbl5) (Rattus norvegicus (Rat)).